A 441-amino-acid polypeptide reads, in one-letter code: Ribosomal protein uS12 methylthiotransferase RimO (441 aa).

Positions 7 to 117 (PKISFVSLGC…VLEAVHRALP (111 aa)) constitute an MTTase N-terminal domain. C16, C52, C81, C148, C152, and C155 together coordinate [4Fe-4S] cluster. The Radical SAM core domain occupies 134–371 (LTPRHYAYLK…MARQQKISAR (238 aa)). The TRAM domain occupies 374 to 440 (KRKVGTRQQV…AYDLHGTVAG (67 aa)).

This sequence belongs to the methylthiotransferase family. RimO subfamily. The cofactor is [4Fe-4S] cluster.

Its subcellular location is the cytoplasm. The enzyme catalyses L-aspartate(89)-[ribosomal protein uS12]-hydrogen + (sulfur carrier)-SH + AH2 + 2 S-adenosyl-L-methionine = 3-methylsulfanyl-L-aspartate(89)-[ribosomal protein uS12]-hydrogen + (sulfur carrier)-H + 5'-deoxyadenosine + L-methionine + A + S-adenosyl-L-homocysteine + 2 H(+). Functionally, catalyzes the methylthiolation of an aspartic acid residue of ribosomal protein uS12. The protein is Ribosomal protein uS12 methylthiotransferase RimO of Rhodopseudomonas palustris (strain BisA53).